The primary structure comprises 310 residues: MNVIDLFSGCGGFSKGFLDENFRILGAIENFKPVVKTYLYNIKAPVWMDDIKRIPPKAFDEFIKNEKVDVIIGSPPCEPFTKANKLIKDNPLDRLYKDKVGRLVLYYIDYVNYFTQRNDDLIFVMENVPQIKEIKDELKKLFGDIGHKVYFNILRAEDYGNPSKRARMFISNIKLKPKKVDKLVVVEEALKDIPKDAKNHEIKKLSKEKVEMISKLKWGEALYRYRGKKKLMFNWYKLHPKKLAPTVKGRSRFIHPYEDRLLTVREQARLMSYPDDFVFFGGRDVQYNQIGESVPPILGRAIAKEIKKQL.

The SAM-dependent MTase C5-type domain occupies 1–310; that stretch reads MNVIDLFSGC…AIAKEIKKQL (310 aa). C77 is an active-site residue.

The protein belongs to the class I-like SAM-binding methyltransferase superfamily. C5-methyltransferase family.

It carries out the reaction a 2'-deoxycytidine in DNA + S-adenosyl-L-methionine = a 5-methyl-2'-deoxycytidine in DNA + S-adenosyl-L-homocysteine + H(+). Its function is as follows. A putative methylase that may protect DNA from cleavage by an unknown endonuclease. In Methanocaldococcus jannaschii (strain ATCC 43067 / DSM 2661 / JAL-1 / JCM 10045 / NBRC 100440) (Methanococcus jannaschii), this protein is Putative type II methyltransferase M.MJ0563P.